Consider the following 608-residue polypeptide: Glutamine--fructose-6-phosphate aminotransferase [isomerizing] (608 aa).

C2 serves as the catalytic Nucleophile; for GATase activity. The 216-residue stretch at 2 to 217 (CGIVGYIGDK…DHEIAIIKKD (216 aa)) folds into the Glutamine amidotransferase type-2 domain. SIS domains are found at residues 285–424 (TKED…KKGT) and 453–598 (VIQK…VDKP). The active-site For Fru-6P isomerization activity is K603.

As to quaternary structure, homodimer.

It is found in the cytoplasm. The enzyme catalyses D-fructose 6-phosphate + L-glutamine = D-glucosamine 6-phosphate + L-glutamate. In terms of biological role, catalyzes the first step in hexosamine metabolism, converting fructose-6P into glucosamine-6P using glutamine as a nitrogen source. The chain is Glutamine--fructose-6-phosphate aminotransferase [isomerizing] from Caldanaerobacter subterraneus subsp. tengcongensis (strain DSM 15242 / JCM 11007 / NBRC 100824 / MB4) (Thermoanaerobacter tengcongensis).